We begin with the raw amino-acid sequence, 104 residues long: PLAT domain-containing protein 3 (104 aa).

One can recognise a PLAT domain in the interval 1 to 104 (MSLRLYDSYG…LARDASPYEL (104 aa)).

The chain is PLAT domain-containing protein 3 from Arabidopsis thaliana (Mouse-ear cress).